The primary structure comprises 188 residues: MNLLIVGLGNPGSNFLHTRHNVGFGLIDKLVMKNALSLRKAKNYEYADFNVDSRRIVLIKPLTYMNLSGNIFPCVFSKFYMKINNLLVVVDNVDLPLGKCRLRKVGGASTHNGLRSISESLGSTKYGRLYIGVGNNSAFGLKDFVLSKFNDSELVRVKNVFNFLSEEILGIDEFSFEHKIATINSSSF.

F15 provides a ligand contact to tRNA. Residue H20 is the Proton acceptor of the active site. Residues Y64, N66, and N112 each contribute to the tRNA site.

Belongs to the PTH family. As to quaternary structure, monomer.

It localises to the cytoplasm. It carries out the reaction an N-acyl-L-alpha-aminoacyl-tRNA + H2O = an N-acyl-L-amino acid + a tRNA + H(+). Hydrolyzes ribosome-free peptidyl-tRNAs (with 1 or more amino acids incorporated), which drop off the ribosome during protein synthesis, or as a result of ribosome stalling. In terms of biological role, catalyzes the release of premature peptidyl moieties from peptidyl-tRNA molecules trapped in stalled 50S ribosomal subunits, and thus maintains levels of free tRNAs and 50S ribosomes. The polypeptide is Peptidyl-tRNA hydrolase (Borrelia recurrentis (strain A1)).